The following is a 274-amino-acid chain: Nitrogenase iron protein (274 aa).

8–15 (GKGGIGKS) serves as a coordination point for ATP. Cys-94 contributes to the [4Fe-4S] cluster binding site. ADP-ribosylarginine; by dinitrogenase reductase ADP-ribosyltransferase is present on Arg-97. Cys-131 contributes to the [4Fe-4S] cluster binding site.

It belongs to the NifH/BchL/ChlL family. As to quaternary structure, homodimer. It depends on [4Fe-4S] cluster as a cofactor. The reversible ADP-ribosylation of Arg-97 inactivates the nitrogenase reductase and regulates nitrogenase activity.

The enzyme catalyses N2 + 8 reduced [2Fe-2S]-[ferredoxin] + 16 ATP + 16 H2O = H2 + 8 oxidized [2Fe-2S]-[ferredoxin] + 2 NH4(+) + 16 ADP + 16 phosphate + 6 H(+). In terms of biological role, the key enzymatic reactions in nitrogen fixation are catalyzed by the nitrogenase complex, which has 2 components: the iron protein and the molybdenum-iron protein. This chain is Nitrogenase iron protein, found in Prosthecochloris aestuarii (strain DSM 271 / SK 413).